A 910-amino-acid chain; its full sequence is Leucine--tRNA ligase (910 aa).

Positions 42 to 52 (PYPSGKLHMGH) match the 'HIGH' region motif. A 'KMSKS' region motif is present at residues 658–662 (TMSKS). Lysine 661 lines the ATP pocket.

This sequence belongs to the class-I aminoacyl-tRNA synthetase family.

It is found in the cytoplasm. The catalysed reaction is tRNA(Leu) + L-leucine + ATP = L-leucyl-tRNA(Leu) + AMP + diphosphate. The protein is Leucine--tRNA ligase of Acidovorax sp. (strain JS42).